The chain runs to 124 residues: Fluoride-specific ion channel FluC (124 aa).

Transmembrane regions (helical) follow at residues 5 to 25 (ILAV…AGTW), 38 to 58 (TLAV…WFLL), 69 to 89 (GLIV…LDTL), and 97 to 117 (ALIA…ATWA). Na(+) is bound by residues Gly76 and Thr79.

This sequence belongs to the fluoride channel Fluc/FEX (TC 1.A.43) family.

It is found in the cell inner membrane. The enzyme catalyses fluoride(in) = fluoride(out). Na(+) is not transported, but it plays an essential structural role and its presence is essential for fluoride channel function. In terms of biological role, fluoride-specific ion channel. Important for reducing fluoride concentration in the cell, thus reducing its toxicity. The sequence is that of Fluoride-specific ion channel FluC from Pseudomonas fluorescens (strain SBW25).